The sequence spans 234 residues: Two-component response regulator ARR9 (234 aa).

Positions 10 to 147 (HVLAVDDSLF…DLNKLKPHMM (138 aa)) constitute a Response regulatory domain. Residue Asp-80 is modified to 4-aspartylphosphate.

The protein belongs to the ARR family. Type-A subfamily. Interacts with AHP1 and AHP3. Post-translationally, two-component system major event consists of a His-to-Asp phosphorelay between a sensor histidine kinase (HK) and a response regulator (RR). In plants, the His-to-Asp phosphorelay involves an additional intermediate named Histidine-containing phosphotransfer protein (HPt). This multistep phosphorelay consists of a His-Asp-His-Asp sequential transfer of a phosphate group between first a His and an Asp of the HK protein, followed by the transfer to a conserved His of the HPt protein and finally the transfer to an Asp in the receiver domain of the RR protein. In terms of tissue distribution, predominantly expressed in roots.

The protein localises to the nucleus. Functions as a response regulator involved in His-to-Asp phosphorelay signal transduction system. Phosphorylation of the Asp residue in the receiver domain activates the ability of the protein to promote the transcription of target genes. Type-A response regulators seem to act as negative regulators of the cytokinin signaling. The sequence is that of Two-component response regulator ARR9 (ARR9) from Arabidopsis thaliana (Mouse-ear cress).